Consider the following 660-residue polypeptide: Acetyl-coenzyme A synthetase (660 aa).

Residues 197–200 and Thr317 contribute to the CoA site; that span reads RGGK. Residues 397–399, 421–426, Asp512, and Arg528 contribute to the ATP site; these read GEP and DTWWQT. Ser536 is a binding site for CoA. Arg539 contributes to the ATP binding site. Mg(2+)-binding residues include Val550, His552, and Val555. At Lys625 the chain carries N6-acetyllysine.

Belongs to the ATP-dependent AMP-binding enzyme family. Mg(2+) serves as cofactor. Acetylated. Deacetylation by the SIR2-homolog deacetylase activates the enzyme.

The catalysed reaction is acetate + ATP + CoA = acetyl-CoA + AMP + diphosphate. Catalyzes the conversion of acetate into acetyl-CoA (AcCoA), an essential intermediate at the junction of anabolic and catabolic pathways. AcsA undergoes a two-step reaction. In the first half reaction, AcsA combines acetate with ATP to form acetyl-adenylate (AcAMP) intermediate. In the second half reaction, it can then transfer the acetyl group from AcAMP to the sulfhydryl group of CoA, forming the product AcCoA. This chain is Acetyl-coenzyme A synthetase, found in Burkholderia thailandensis (strain ATCC 700388 / DSM 13276 / CCUG 48851 / CIP 106301 / E264).